Consider the following 184-residue polypeptide: Small ribosomal subunit protein eS8 (184 aa).

Positions 1-23 are disordered; the sequence is MGISRDSRHKRRLTGGRYPVHKK. Residues 7–23 are compositionally biased toward basic residues; the sequence is SRHKRRLTGGRYPVHKK.

This sequence belongs to the eukaryotic ribosomal protein eS8 family.

This chain is Small ribosomal subunit protein eS8 (RPS8), found in Theileria annulata.